The following is a 75-amino-acid chain: High-potential iron-sulfur protein (75 aa).

Residues Cys-38, Cys-41, Cys-54, and Cys-68 each contribute to the [4Fe-4S] cluster site.

In terms of assembly, homodimer. Monomer at different ionic strengths.

Its function is as follows. Specific class of high-redox-potential 4Fe-4S ferredoxins. Functions in anaerobic electron transport in most purple and in some other photosynthetic bacteria and in at least one genus (Paracoccus) of halophilic, denitrifying bacteria. Competent in photosynthetic electron transfer to oxidized cytochrome bc1 complex via the membrane-bound c-type tetraheme. This Rhodoferax fermentans protein is High-potential iron-sulfur protein (hip).